The primary structure comprises 633 residues: tRNA uridine 5-carboxymethylaminomethyl modification enzyme MnmG (633 aa).

An FAD-binding site is contributed by 13-18 (GGGHAG). 273–287 (GPRYCPSIEDKINRF) contacts NAD(+).

Belongs to the MnmG family. Homodimer. Heterotetramer of two MnmE and two MnmG subunits. The cofactor is FAD.

The protein resides in the cytoplasm. Its function is as follows. NAD-binding protein involved in the addition of a carboxymethylaminomethyl (cmnm) group at the wobble position (U34) of certain tRNAs, forming tRNA-cmnm(5)s(2)U34. In Pseudoalteromonas atlantica (strain T6c / ATCC BAA-1087), this protein is tRNA uridine 5-carboxymethylaminomethyl modification enzyme MnmG.